Reading from the N-terminus, the 290-residue chain is Arylamine N-acetyltransferase 2 (290 aa).

C68 (acyl-thioester intermediate) is an active-site residue. The CoA site is built by S103 and G104. 106–107 contributes to the substrate binding site; the sequence is IH. Active-site residues include H107 and D122. Y208 contacts CoA.

Belongs to the arylamine N-acetyltransferase family.

The protein localises to the cytoplasm. It catalyses the reaction an arylamine + acetyl-CoA = an N-acetylarylamine + CoA. The catalysed reaction is an N-hydroxyarylamine + acetyl-CoA = an N-acetoxyarylamine + CoA. Its function is as follows. Catalyzes the N- or O-acetylation of various arylamine and heterocyclic amine substrates. Participates in the detoxification of a plethora of hydrazine and arylamine drugs. This is Arylamine N-acetyltransferase 2 (Nat2) from Rattus norvegicus (Rat).